We begin with the raw amino-acid sequence, 90 residues long: Elongation factor 1-beta (90 aa).

Belongs to the EF-1-beta/EF-1-delta family.

In terms of biological role, promotes the exchange of GDP for GTP in EF-1-alpha/GDP, thus allowing the regeneration of EF-1-alpha/GTP that could then be used to form the ternary complex EF-1-alpha/GTP/AAtRNA. This is Elongation factor 1-beta (ef1b) from Aeropyrum pernix (strain ATCC 700893 / DSM 11879 / JCM 9820 / NBRC 100138 / K1).